We begin with the raw amino-acid sequence, 496 residues long: MDRMKKIKRQLSMTLRGGRGIDKTNGAPEQIGLDESGGGGGSDPGEAPTRAAPGELRSARGPLSSAPEIVHEDLKMGSDGESDQASATSSDEVQSPVRVRMRNHPPRKISTEDINKRLSLPADIRLPEGYLEKLTLNSPIFDKPLSRRLRRVSLSEIGFGKLETYIKLDKLGEGTYATVYKGKSKLTDNLVALKEIRLEHEEGAPCTAIREVSLLKDLKHANIVTLHDIIHTEKSLTLVFEYLDKDLKQYLDDCGNIINMHNVKLFLFQLLRGLAYCHRQKVLHRDLKPQNLLINERGELKLADFGLARAKSIPTKTYSNEVVTLWYRPPDILLGSTDYSTQIDMWGVGCIFYEMATGRPLFPGSTVEEQLHFIFRILGTPTEETWPGILSNEEFKTYNYPKYRAEALLSHAPRLDSDGADLLTKLLQFEGRNRISAEDAMKHPFFLSLGERIHKLPDTTSIFALKEIQLQKEASLRSSSMPDSGRPAFRVVDTEF.

Residues 1–97 form a disordered region; sequence MDRMKKIKRQ…TSSDEVQSPV (97 aa). Ser-12 carries the phosphoserine; by BRSK2 modification. 7 positions are modified to phosphoserine: Ser-36, Ser-42, Ser-64, Ser-65, Ser-78, Ser-82, and Ser-89. Residues 69–78 are compositionally biased toward basic and acidic residues; it reads IVHEDLKMGS. Residues 83 to 93 show a composition bias toward polar residues; sequence DQASATSSDEV. Ser-95 carries the phosphoserine; by CDK5 modification. Phosphoserine occurs at positions 110, 119, 138, 146, 153, and 155. A Protein kinase domain is found at 165–446; sequence YIKLDKLGEG…AEDAMKHPFF (282 aa). ATP is bound by residues 171 to 179 and Lys-194; that span reads LGEGTYATV. Thr-175 bears the Phosphothreonine mark. Residue Asp-286 is the Proton acceptor of the active site. Residue Thr-380 is modified to Phosphothreonine. Ser-391, Ser-478, and Ser-480 each carry phosphoserine.

The protein belongs to the protein kinase superfamily. CMGC Ser/Thr protein kinase family. CDC2/CDKX subfamily. Found in a complex containing CABLES1, CDK17 and TDRD7. Interacts with BRSK2. Identified in a complex with NSF, syntaxin-1, synaptotagmin, SYN1, SYP and CDK5R1. Interacts with YWHAH, YWHAQ and YWHAZ. Interacts with CCNY; this interaction increases the CDK16 kinase activity. Interacts with CCNYL1; this interaction mutually increases the stability of CDK16 and CCNYL1 and increases the kinase activity of CDK16. Interacts with NSF. Post-translationally, phosphorylation of CDK16 is essential for the binding of CCNY, but also essential for the regulation of CDK16 kinase activity. Phosphorylation of CDK16 is essential for the binding of CCNYl1, but also essential for the regulation of CDK16 kinase activity. Ser-146 and Ser-153 are the most critical sites for the binding of CCNYL1 and for modulating CDK16 kinase activity. Phosphorylation at Ser-153 inhibits kinase activity. In terms of tissue distribution, detected in pancreas islets (at protein level). Detected in brain and pancreas.

It is found in the cytoplasm. It localises to the cytoplasmic vesicle. The protein resides in the secretory vesicle. Its subcellular location is the cell membrane. The protein localises to the synapse. It is found in the synaptosome. The catalysed reaction is L-seryl-[protein] + ATP = O-phospho-L-seryl-[protein] + ADP + H(+). It carries out the reaction L-threonyl-[protein] + ATP = O-phospho-L-threonyl-[protein] + ADP + H(+). Functionally, protein kinase that plays a role in vesicle-mediated transport processes and exocytosis. Regulates GH1 release by brain neurons. Phosphorylates NSF, and thereby regulates NSF oligomerization. Required for normal spermatogenesis. Regulates neuron differentiation and dendrite development. Plays a role in the regulation of insulin secretion in response to changes in blood glucose levels. Can phosphorylate CCNY at 'Ser-336' (in vitro). This Homo sapiens (Human) protein is Cyclin-dependent kinase 16 (CDK16).